A 25-amino-acid chain; its full sequence is Large ribosomal subunit protein uL29 (25 aa).

The protein belongs to the universal ribosomal protein uL29 family.

This Brevundimonas vesicularis (Pseudomonas vesicularis) protein is Large ribosomal subunit protein uL29 (rpmC).